We begin with the raw amino-acid sequence, 797 residues long: Cleavage factor two protein 2 (797 aa).

Disordered regions lie at residues 519–557 (ENDS…EVPS) and 677–703 (PSEE…KKEE). Residues 684-703 (KEEVEKKDGDKERNEEKKEE) are compositionally biased toward basic and acidic residues.

In terms of assembly, component of the cleavage and polyadenylation factor (CPF) complex, which is composed of cft1, cft2, ysh1, pta1, swd2, pfs2, dis2, yth1, ssu72, and fip1.

It is found in the nucleus. In terms of biological role, RNA-binding component of the cleavage and polyadenylation factor (CPF) complex, which plays a key role in polyadenylation-dependent pre-mRNA 3'-end formation and cooperates with cleavage factors including the CFIA complex and NAB4/CFIB. May be involved in poly(A)-site recognition. May be involved in the association of the CPF, CPFIA and RNA polymerase II complexes. The protein is Cleavage factor two protein 2 (cft2) of Schizosaccharomyces pombe (strain 972 / ATCC 24843) (Fission yeast).